A 360-amino-acid polypeptide reads, in one-letter code: MFVARSIAADHKDLIHDVSFDFHGRRMATCSSDQSVKVWDKSESGDWHCTASWKTHSGSVWRVTWAHPEFGQVLASCSFDRTAAVWEEIVGESNDKLRGQSHWVKRTTLVDSRTSVTDVKFAPKHMGLMLATCSADGIVRIYEAPDVMNLSQWSLQHEISCKLSCSCISWNPSSSRAHSPMIAVGSDDSSPNAMAKVQIFEYNENTRKYAKAETLMTVTDPVHDIAFAPNLGRSFHILAIATKDVRIFTLKPVRKELTSSGGPTKFEIHIVAQFDNHNSQVWRVSWNITGTVLASSGDDGCVRLWKANYMDNWKCTGILKGNGSPVNGSSQQGTSNPSLGSTIPSLQNSLNGSSAGRKHS.

WD repeat units follow at residues 10 to 49 (DHKDLIHDVSFDFHGRRMATCSSDQSVKVWDKSESGDWHC), 55 to 96 (THSG…SNDK), 111 to 152 (DSRT…NLSQ), 160 to 210 (SCKL…RKYA), 217 to 258 (TVTD…KELT), and 276 to 315 (NHNSQVWRVSWNITGTVLASSGDDGCVRLWKANYMDNWKC). Residue lysine 12 forms a Glycyl lysine isopeptide (Lys-Gly) (interchain with G-Cter in SUMO2) linkage. A phosphoserine mark is found at serine 179 and serine 190. Residues 324–354 (SPVNGSSQQGTSNPSLGSTIPSLQNSLNGSS) are compositionally biased toward polar residues. A disordered region spans residues 324 to 360 (SPVNGSSQQGTSNPSLGSTIPSLQNSLNGSSAGRKHS).

Belongs to the WD repeat SEC13 family. In terms of assembly, component of the Nup107-160 subcomplex of the nuclear pore complex (NPC). The Nup107-160 subcomplex includes NUP160, NUP133, NUP107, NUP98, NUP85, NUP43, NUP37, SEH1 and SEC13. The SEH1 subunit appears to be only weakly associated with the Nup107-160 subcomplex. Component of the GATOR2 subcomplex, composed of MIOS, SEC13, SEH1L, WDR24 and WDR59. The GATOR2 complex interacts with CASTOR1 and CASTOR2; the interaction is negatively regulated by arginine. The GATOR2 complex interacts with SESN1, SESN2 and SESN3; the interaction is negatively regulated by amino acids. SESN1, SESN2 and SESN3 convey leucine availability via direct interaction with SEH1L and WDR24.

The protein localises to the chromosome. The protein resides in the centromere. It localises to the kinetochore. Its subcellular location is the nucleus. It is found in the nuclear pore complex. The protein localises to the lysosome membrane. The GATOR2 complex is negatively regulated by the upstream amino acid sensors CASTOR1 and SESN2, which sequester the GATOR2 complex in absence of amino acids. In the presence of abundant amino acids, GATOR2 is released from CASTOR1 and SESN2 and activated. Its function is as follows. Component of the Nup107-160 subcomplex of the nuclear pore complex (NPC). The Nup107-160 subcomplex is required for the assembly of a functional NPC. The Nup107-160 subcomplex is also required for normal kinetochore microtubule attachment, mitotic progression and chromosome segregation. This subunit plays a role in recruitment of the Nup107-160 subcomplex to the kinetochore. As a component of the GATOR2 complex, functions as an activator of the amino acid-sensing branch of the mTORC1 signaling pathway. The GATOR2 complex indirectly activates mTORC1 through the inhibition of the GATOR1 subcomplex. GATOR2 probably acts as an E3 ubiquitin-protein ligase toward GATOR1. In the presence of abundant amino acids, the GATOR2 complex mediates ubiquitination of the NPRL2 core component of the GATOR1 complex, leading to GATOR1 inactivation. In the absence of amino acids, GATOR2 is inhibited, activating the GATOR1 complex. Within the GATOR2 complex, SEC13 and SEH1L are required to stabilize the complex. This chain is Nucleoporin SEH1 (SEH1L), found in Homo sapiens (Human).